A 129-amino-acid polypeptide reads, in one-letter code: uncharacterized protein (129 aa).

The first 24 residues, 1 to 24, serve as a signal peptide directing secretion; it reads MAFGWHSMHGSIIWFLQIAQLSTA. The next 2 helical transmembrane spans lie at 38-58 and 95-115; these read ISNL…CAIF and IAHI…FTPL.

The protein resides in the membrane. This is an uncharacterized protein from Saccharomyces cerevisiae (strain ATCC 204508 / S288c) (Baker's yeast).